The primary structure comprises 176 residues: Peptide deformylase (176 aa).

Residues Cys95 and His137 each coordinate Fe cation. Glu138 is a catalytic residue. His141 contributes to the Fe cation binding site.

Belongs to the polypeptide deformylase family. Fe(2+) serves as cofactor.

The catalysed reaction is N-terminal N-formyl-L-methionyl-[peptide] + H2O = N-terminal L-methionyl-[peptide] + formate. In terms of biological role, removes the formyl group from the N-terminal Met of newly synthesized proteins. Requires at least a dipeptide for an efficient rate of reaction. N-terminal L-methionine is a prerequisite for activity but the enzyme has broad specificity at other positions. In Hyphomonas neptunium (strain ATCC 15444), this protein is Peptide deformylase.